We begin with the raw amino-acid sequence, 98 residues long: HssA/B-like protein 39 (98 aa).

Residues 1 to 21 (MTLFSSISSMSTSMSGSKSSI) are disordered.

Belongs to the hssA/B family.

The protein is HssA/B-like protein 39 (hssl39) of Dictyostelium discoideum (Social amoeba).